The sequence spans 222 residues: Superoxide dismutase [Mn], mitochondrial (222 aa).

The transit peptide at 1 to 24 (MLSRAVCGTGRQLAPALGYLGSRQ) directs the protein to the mitochondrion. His-50 contributes to the Mn(2+) binding site. Tyr-58 is subject to 3'-nitrotyrosine. N6-acetyllysine; alternate occurs at positions 68 and 75. Lys-68 and Lys-75 each carry N6-succinyllysine; alternate. A Mn(2+)-binding site is contributed by His-98. The residue at position 114 (Lys-114) is an N6-acetyllysine. Residues Lys-122 and Lys-130 each carry the N6-acetyllysine; alternate modification. Lys-122 and Lys-130 each carry N6-succinyllysine; alternate. Residues Asp-183 and His-187 each contribute to the Mn(2+) site. At Lys-202 the chain carries N6-acetyllysine.

The protein belongs to the iron/manganese superoxide dismutase family. Homotetramer. Requires Mn(2+) as cofactor. In terms of processing, nitrated under oxidative stress. Nitration coupled with oxidation inhibits the catalytic activity. Post-translationally, acetylation at Lys-122 decreases enzymatic activity. Deacetylated by SIRT3 upon exposure to ionizing radiations or after long fasting. Polyubiquitinated; leading to proteasomal degradation. Deubiquitinated by USP36 which increases protein stability.

It is found in the mitochondrion matrix. It carries out the reaction 2 superoxide + 2 H(+) = H2O2 + O2. In terms of biological role, destroys superoxide anion radicals which are normally produced within the cells and which are toxic to biological systems. The polypeptide is Superoxide dismutase [Mn], mitochondrial (SOD2) (Macaca nemestrina (Pig-tailed macaque)).